We begin with the raw amino-acid sequence, 296 residues long: 4-hydroxybenzoate octaprenyltransferase (296 aa).

8 helical membrane passes run 28 to 48, 51 to 71, 102 to 122, 143 to 163, 174 to 194, 212 to 232, 233 to 253, and 274 to 294; these read IGTL…SDGI, LAVL…GCVI, LLLT…LNHL, FFPI…PMAF, AWIL…VYAM, FGRY…LLMA, VLGA…IVLL, and FLAN…HTFF.

It belongs to the UbiA prenyltransferase family. Requires Mg(2+) as cofactor.

The protein localises to the cell inner membrane. It catalyses the reaction all-trans-octaprenyl diphosphate + 4-hydroxybenzoate = 4-hydroxy-3-(all-trans-octaprenyl)benzoate + diphosphate. It participates in cofactor biosynthesis; ubiquinone biosynthesis. Its function is as follows. Catalyzes the prenylation of para-hydroxybenzoate (PHB) with an all-trans polyprenyl group. Mediates the second step in the final reaction sequence of ubiquinone-8 (UQ-8) biosynthesis, which is the condensation of the polyisoprenoid side chain with PHB, generating the first membrane-bound Q intermediate 3-octaprenyl-4-hydroxybenzoate. The sequence is that of 4-hydroxybenzoate octaprenyltransferase from Neisseria gonorrhoeae (strain ATCC 700825 / FA 1090).